Reading from the N-terminus, the 176-residue chain is MSDLVNKKFPAGDYKFQYIAISQSDADSESCKMPQTVEWSKLISENKKVIITGAPAAFSPTCTVSHIPGYINYLDELVKEKEVDQVIVVTVDNPFANQAWAKSLGVKDTTHIKFASDPGCAFTKSIGFELAVGDGVYWSGRWAMVVENGIVTYAAKETNPGTDVTVSSVESVLAHL.

The residue at position 2 (S2) is an N-acetylserine. One can recognise a Thioredoxin domain in the interval 9–176 (FPAGDYKFQY…SSVESVLAHL (168 aa)). The residue at position 28 (S28) is a Phosphoserine. K32 is covalently cross-linked (Glycyl lysine isopeptide (Lys-Gly) (interchain with G-Cter in URM1)). K48 participates in a covalent cross-link: Glycyl lysine isopeptide (Lys-Gly) (interchain with G-Cter in ubiquitin); alternate. Residue K48 forms a Glycyl lysine isopeptide (Lys-Gly) (interchain with G-Cter in URM1); alternate linkage. S59 carries the post-translational modification Phosphoserine. C62 acts as the Cysteine sulfenic acid (-SOH) intermediate in catalysis. C62 is subject to Cysteine persulfide. K79 participates in a covalent cross-link: Glycyl lysine isopeptide (Lys-Gly) (interchain with G-Cter in URM1). A Glycyl lysine isopeptide (Lys-Gly) (interchain with G-Cter in ubiquitin); alternate cross-link involves residue K81. K81 is covalently cross-linked (Glycyl lysine isopeptide (Lys-Gly) (interchain with G-Cter in URM1); alternate). K107 participates in a covalent cross-link: Glycyl lysine isopeptide (Lys-Gly) (interchain with G-Cter in URM1). Residue K113 forms a Glycyl lysine isopeptide (Lys-Gly) (interchain with G-Cter in ubiquitin) linkage. S116 carries the phosphoserine modification. C120 carries the post-translational modification Cysteine persulfide. Residue K124 forms a Glycyl lysine isopeptide (Lys-Gly) (interchain with G-Cter in URM1) linkage. K156 participates in a covalent cross-link: Glycyl lysine isopeptide (Lys-Gly) (interchain with G-Cter in URM1); alternate. Residue K156 forms a Glycyl lysine isopeptide (Lys-Gly) (interchain with G-Cter in SUMO); alternate linkage.

The protein belongs to the peroxiredoxin family. Prx5 subfamily. As to quaternary structure, homodimer; disulfide-linked, upon oxidation. Conjugated to URM1, a ubiquitin-like protein, in response to oxidative stresses. The attachment of URM1 to lysine residues exclusively depends on the presence of a peroxidatic cysteine in the target protein, with low specificity for the particular residue, motif, or structural context at which urmylation can occur. The URM1-conjugation reaction is mechanistically and directly coupled to the process of cysteine persulfidation, transfering the sulfur atom of the URM1 thiocarboxyl group to redox-active cysteine residues in the target protein if it is exposed to oxidative conditions. In terms of processing, persulfidated on specific redox-active cysteine residues. Persulfidation (also called protein S-sulfhydration) may provide a molecular mechanism that enables cells to protect vulnerable cysteine residues from reactive oxygen species (ROS) under stress conditions.

It localises to the cytoplasm. The catalysed reaction is a hydroperoxide + [thioredoxin]-dithiol = an alcohol + [thioredoxin]-disulfide + H2O. Thiol-specific peroxidase that catalyzes the reduction of hydrogen peroxide and organic hydroperoxides to water and alcohols, respectively. Plays a role in cell protection against oxidative stress by detoxifying peroxides and as sensor of hydrogen peroxide-mediated signaling events. Preferentially eliminates organic peroxides rather than hydrogen peroxide. Relays alkyl hydroperoxides as a signal to the transcription factor CAD1/YAP2 by inducing the formation of intramolecular disulfide bonds in CAD1, which causes its nuclear accumulation and activation. Involved in cellular Mn(2+) homeostasis. This chain is Peroxiredoxin AHP1, found in Saccharomyces cerevisiae (strain ATCC 204508 / S288c) (Baker's yeast).